Consider the following 210-residue polypeptide: Glycerol-3-phosphate acyltransferase (210 aa).

6 consecutive transmembrane segments (helical) span residues 8 to 28 (LILL…LLLT), 56 to 76 (GLAA…VLIA), 87 to 107 (TMAV…WLGF), 119 to 139 (TIWV…LLVA), 144 to 164 (ISSA…VLLS), and 165 to 185 (GRPL…LIWA).

This sequence belongs to the PlsY family. Probably interacts with PlsX.

Its subcellular location is the cell inner membrane. The catalysed reaction is an acyl phosphate + sn-glycerol 3-phosphate = a 1-acyl-sn-glycero-3-phosphate + phosphate. It functions in the pathway lipid metabolism; phospholipid metabolism. In terms of biological role, catalyzes the transfer of an acyl group from acyl-phosphate (acyl-PO(4)) to glycerol-3-phosphate (G3P) to form lysophosphatidic acid (LPA). This enzyme utilizes acyl-phosphate as fatty acyl donor, but not acyl-CoA or acyl-ACP. The chain is Glycerol-3-phosphate acyltransferase from Gluconobacter oxydans (strain 621H) (Gluconobacter suboxydans).